The sequence spans 491 residues: Ketol-acid reductoisomerase (NADP(+)) (491 aa).

The region spanning 15 to 208 (AQLGKCRFMG…GGHRAGVLES (194 aa)) is the KARI N-terminal Rossmann domain. NADP(+) is bound by residues 45–48 (CGAQ), R68, R76, S78, and 108–110 (DKQ). The active site involves H132. G158 provides a ligand contact to NADP(+). 2 consecutive KARI C-terminal knotted domains span residues 209 to 344 (SFVA…TAPQ) and 345 to 484 (YEGK…MTDM). Mg(2+)-binding residues include D217, E221, E389, and E393. S414 is a substrate binding site.

It belongs to the ketol-acid reductoisomerase family. Requires Mg(2+) as cofactor.

The enzyme catalyses (2R)-2,3-dihydroxy-3-methylbutanoate + NADP(+) = (2S)-2-acetolactate + NADPH + H(+). It carries out the reaction (2R,3R)-2,3-dihydroxy-3-methylpentanoate + NADP(+) = (S)-2-ethyl-2-hydroxy-3-oxobutanoate + NADPH + H(+). It functions in the pathway amino-acid biosynthesis; L-isoleucine biosynthesis; L-isoleucine from 2-oxobutanoate: step 2/4. The protein operates within amino-acid biosynthesis; L-valine biosynthesis; L-valine from pyruvate: step 2/4. In terms of biological role, involved in the biosynthesis of branched-chain amino acids (BCAA). Catalyzes an alkyl-migration followed by a ketol-acid reduction of (S)-2-acetolactate (S2AL) to yield (R)-2,3-dihydroxy-isovalerate. In the isomerase reaction, S2AL is rearranged via a Mg-dependent methyl migration to produce 3-hydroxy-3-methyl-2-ketobutyrate (HMKB). In the reductase reaction, this 2-ketoacid undergoes a metal-dependent reduction by NADPH to yield (R)-2,3-dihydroxy-isovalerate. The polypeptide is Ketol-acid reductoisomerase (NADP(+)) (Escherichia coli O6:K15:H31 (strain 536 / UPEC)).